A 178-amino-acid chain; its full sequence is Interleukin-10 (178 aa).

The N-terminal stretch at 1–18 is a signal peptide; the sequence is MPRSALLCCLILLAGVAA. 2 disulfides stabilise this stretch: Cys30/Cys126 and Cys80/Cys132. An N-linked (GlcNAc...) asparagine glycan is attached at Asn134.

Belongs to the IL-10 family. Homodimer. Interacts with IL10RA and IL10RB.

Its subcellular location is the secreted. Its function is as follows. Major immune regulatory cytokine that acts on many cells of the immune system where it has profound anti-inflammatory functions, limiting excessive tissue disruption caused by inflammation. Mechanistically, IL10 binds to its heterotetrameric receptor comprising IL10RA and IL10RB leading to JAK1 and STAT2-mediated phosphorylation of STAT3. In turn, STAT3 translocates to the nucleus where it drives expression of anti-inflammatory mediators. Targets antigen-presenting cells (APCs) such as macrophages and monocytes and inhibits their release of pro-inflammatory cytokines including granulocyte-macrophage colony-stimulating factor /GM-CSF, granulocyte colony-stimulating factor/G-CSF, IL-1 alpha, IL-1 beta, IL-6, IL-8 and TNF-alpha. Also interferes with antigen presentation by reducing the expression of MHC-class II and co-stimulatory molecules, thereby inhibiting their ability to induce T cell activation. In addition, controls the inflammatory response of macrophages by reprogramming essential metabolic pathways including mTOR signaling. The sequence is that of Interleukin-10 (IL10) from Lama glama (Llama).